A 313-amino-acid polypeptide reads, in one-letter code: Protein FixB (313 aa).

255–283 (LYLAVGISGQIQHMVGANASQTIFAINKD) serves as a coordination point for FAD.

Belongs to the ETF alpha-subunit/FixB family. Heterodimer of FixA and FixB.

It functions in the pathway amine and polyamine metabolism; carnitine metabolism. Required for anaerobic carnitine reduction. May bring reductant to CaiA. The polypeptide is Protein FixB (Escherichia coli O6:K15:H31 (strain 536 / UPEC)).